The primary structure comprises 231 residues: Large ribosomal subunit protein uL1 (231 aa).

It belongs to the universal ribosomal protein uL1 family. Part of the 50S ribosomal subunit.

Binds directly to 23S rRNA. The L1 stalk is quite mobile in the ribosome, and is involved in E site tRNA release. In terms of biological role, protein L1 is also a translational repressor protein, it controls the translation of the L11 operon by binding to its mRNA. The chain is Large ribosomal subunit protein uL1 from Acinetobacter baumannii (strain AB307-0294).